Reading from the N-terminus, the 123-residue chain is Small ribosomal subunit protein uS12 (123 aa).

Aspartate 89 is subject to 3-methylthioaspartic acid. Residues 104–123 (TAGVKDRKQARSKYGAKRPK) are disordered. The span at 113–123 (ARSKYGAKRPK) shows a compositional bias: basic residues.

The protein belongs to the universal ribosomal protein uS12 family. In terms of assembly, part of the 30S ribosomal subunit. Contacts proteins S8 and S17. May interact with IF1 in the 30S initiation complex.

Its function is as follows. With S4 and S5 plays an important role in translational accuracy. Functionally, interacts with and stabilizes bases of the 16S rRNA that are involved in tRNA selection in the A site and with the mRNA backbone. Located at the interface of the 30S and 50S subunits, it traverses the body of the 30S subunit contacting proteins on the other side and probably holding the rRNA structure together. The combined cluster of proteins S8, S12 and S17 appears to hold together the shoulder and platform of the 30S subunit. The protein is Small ribosomal subunit protein uS12 of Neisseria gonorrhoeae (strain ATCC 700825 / FA 1090).